The chain runs to 273 residues: Tyrosinase (273 aa).

H38, H54, H63, H190, H194, and H216 together coordinate Cu cation.

It belongs to the tyrosinase family. The cofactor is Cu(2+).

The enzyme catalyses 2 L-dopa + O2 = 2 L-dopaquinone + 2 H2O. It carries out the reaction L-tyrosine + O2 = L-dopaquinone + H2O. This is a copper-containing oxidase that functions in the formation of pigments such as melanins and other polyphenolic compounds. The chain is Tyrosinase (melC2) from Streptomyces antibioticus.